Reading from the N-terminus, the 569-residue chain is F-box/WD repeat-containing protein 5 (569 aa).

Positions 3 to 49 constitute an F-box domain; sequence EGGMPLLPDSLVYQIFLSLGPADVLAAGLVCRQWQAVSRDEFLWREQ. The stretch at 90–129 is one WD 1 repeat; the sequence is EHTDQVLHLSFSHSGYQFASCSKDCTVKIWNNDLTISLLH. S151 carries the phosphoserine; by PLK4 modification. The D-box motif lies at 308–316; the sequence is RRVFDSVLD. WD repeat units lie at residues 470 to 509 and 511 to 551; these read TPND…CLAK and RHED…RVLQ.

This sequence belongs to the FBXW5 family. As to quaternary structure, part of the SCF (SKP1-CUL1-F-box) E3 ubiquitin-protein ligase complex SCF(FBXW5) composed of CUL1, SKP1, RBX1 and FBXW5. Component of the DCX(FBXW5) E3 ubiquitin ligase complex, at least composed of (CUL4A or CUL4B), DDB1, FBXW5 and RBX1. Interacts with CDC20, EPS8, TSC1, TSC2 and SASS6. Interacts with TNFAIP8L1; TNFAIP8L1 competes with TSC2 to bind FBXW5 increasing TSC2 stability by preventing its ubiquitination. In terms of processing, phosphorylated at Ser-151 by PLK4 during the G1/S transition, leading to inhibit its ability to ubiquitinate SASS6. Ubiquitinated and degraded by the APC/C complex during mitosis and G1 phase.

It localises to the cytoplasm. Its pathway is protein modification; protein ubiquitination. Its function is as follows. Substrate recognition component of both SCF (SKP1-CUL1-F-box protein) and DCX (DDB1-CUL4-X-box) E3 ubiquitin-protein ligase complexes. Substrate recognition component of the SCF(FBXW5) E3 ubiquitin-protein ligase complex which mediates the ubiquitination and subsequent proteasomal degradation of SASS6 during S phase, leading to prevent centriole reduplication. The SCF(FBXW5) complex also mediates ubiquitination and degradation of actin-regulator EPS8 during G2 phase, leading to the transient degradation of EPS8 and subsequent cell shape changes required to allow mitotic progression. Substrate-specific adapter of the DCX(FBXW5) E3 ubiquitin-protein ligase complex which mediates the polyubiquitination and subsequent degradation of TSC2. May also act as a negative regulator of MAP3K7/TAK1 signaling in the interleukin-1B (IL1B) signaling pathway. In Rattus norvegicus (Rat), this protein is F-box/WD repeat-containing protein 5 (Fbxw5).